The chain runs to 490 residues: Polyamine transporter RMV1 (490 aa).

A compositionally biased stretch (polar residues) spans 1 to 21 (MTELSSPNLDSASQKPRISTE). Positions 1-38 (MTELSSPNLDSASQKPRISTENPPPPPPHISIGVTTGD) are disordered. Transmembrane regions (helical) follow at residues 53-73 (ITVL…PFGI), 83-103 (LLAI…EALI), 116-136 (GYVV…QGWV), 160-180 (IPIL…TVAL), 188-208 (LSIV…PFVV), 231-248 (GVNW…LNYW), 273-293 (LLLV…AIAL), 303-323 (FADI…QAAA), 363-383 (TPWV…WLSF), 386-406 (IVAA…ITFV), 425-445 (VLGS…IMAF), and 448-468 (LKVA…QPCL).

This sequence belongs to the amino acid-polyamine-organocation (APC) superfamily. Polyamine:cation symporter (PHS) (TC 2.A.3.12) family.

The protein resides in the cell membrane. Its function is as follows. Cell membrane polyamine/proton symporter involved in the polyamine uptake in cells. Possesses high affinity for spermine and spermidine and lower affinity for putrescine. Transports paraquat, a polyamine analog, and thus confers sensitivity to this chemical which is used as a herbicide. In Arabidopsis thaliana (Mouse-ear cress), this protein is Polyamine transporter RMV1 (RMV1).